An 85-amino-acid chain; its full sequence is uncharacterized protein (85 aa).

An N-terminal signal peptide occupies residues 1–20 (MIKLFCVLAAFISINSACQS).

This is an uncharacterized protein from Invertebrate iridescent virus 6 (IIV-6).